We begin with the raw amino-acid sequence, 619 residues long: Mitogen-activated protein kinase kinase kinase 2 (619 aa).

Residues 25–45 (LSLQETRKAKSSSPKKQNDVR) are disordered. Ser-26 carries the phosphoserine modification. A PB1 domain is found at 43–122 (DVRVKFEHRG…KSLKILLVIN (80 aa)). Ser-153, Ser-159, and Ser-164 each carry phosphoserine. Disordered stretches follow at residues 154–173 (IIGP…IPDE), 201–248 (LDPL…QEFS), and 289–355 (RTQG…APTN). Over residues 203–219 (PLSLSSPENSGSGSCPS) the composition is skewed to low complexity. Phosphoserine occurs at positions 239, 297, 311, 331, 344, and 349. Residues 290–299 (TQGTSLRSPV) show a composition bias toward polar residues. The span at 300 to 315 (SFSPTDHSLSTSSGSS) shows a compositional bias: low complexity. The span at 322 to 332 (DDSRIRRRGSD) shows a compositional bias: basic and acidic residues. The region spanning 357 to 617 (RLGKLLGQGA…DELLRHMFVH (261 aa)) is the Protein kinase domain. Residues 362–371 (LGQGAFGRVY) and Lys-385 each bind ATP. Catalysis depends on Asp-483, which acts as the Proton acceptor.

The protein belongs to the protein kinase superfamily. STE Ser/Thr protein kinase family. MAP kinase kinase kinase subfamily. Interacts with PKN2; the interaction activates PKN2 kinase activity in a MAP3K2-independent kinase activity. Self-associates. Binds both upstream activators and downstream substrates in multimolecular complexes. Interacts (via the kinase catalytic domain) with STK38. Interacts with XIAP/BIRC4. Requires Mg(2+) as cofactor. Post-translationally, autophosphorylated. In terms of processing, ubiquitination by XIAP/BIRC4 does not lead to proteasomal degradation.

Its subcellular location is the cytoplasm. It is found in the nucleus. The enzyme catalyses L-seryl-[protein] + ATP = O-phospho-L-seryl-[protein] + ADP + H(+). It carries out the reaction L-threonyl-[protein] + ATP = O-phospho-L-threonyl-[protein] + ADP + H(+). With respect to regulation, activated by phosphorylation on Thr-524. Component of a protein kinase signal transduction cascade. Regulates the JNK and ERK5 pathways by phosphorylating and activating MAP2K5 and MAP2K7. Plays a role in caveolae kiss-and-run dynamics. This is Mitogen-activated protein kinase kinase kinase 2 (MAP3K2) from Homo sapiens (Human).